The sequence spans 1386 residues: MPEGAQGLSLSKPSPSLGCGRRGEVCDCGTVCETRTAPAAPTMASPRGSGSSTSLSTVGSEGDPAPGPTPACSASRPEPLPGPPIRLHLSPVGIPGSARPSRLERVAREIVETERAYVRDLRSIVEDYLGPLLDGGVLGLSVEQVGTLFANIEDIYEFSSELLEDLENSSSAGGIAECFVQRSEDFDIYTLYCMNYPSSLALLRELSLSPPAALWLQERQAQLRHSLPLQSFLLKPVQRILKYHLLLQELGKHWAEGPGTGGREMVEEAIVSMTAVAWYINDMKRKQEHAARLQEVQRRLGGWTGPELSAFGELVLEGAFRGGGGGGPRLRGGERLLFLFSRMLLVAKRRGLEYTYKGHIFCCNLSVSESPRDPLGFKVSDLTIPKHRHLLQAKNQEEKRLWIHCLQRLFFENHPASIPAKAKQVLLENSLHCAPKSKPVLEPLTPPLGSPRPRDARSFTPGRRNTAPSPGPSVIRRGRRQSEPVKDPYVMFPQNAKPGFKHAGSEGELYPPESQPPVSGSAPPEDLEDAGPPTLDPSGTSITEEILELLNQRGLRDPGPSTHDIPKFPGDSQVPGDSETLTFQALPSRDSSEEEEEEEEGLEMDERGPSPLHVLEGLESSIAAEMPSIPCLTKIPDVPNLPEIPSRCEIPEGSRLPSLSDISDVFEMPCLPAIPSVPNTPSLSSTPTLSCDSWLQGPLQEPAEAPATRRELFSGSNPGKLGEPPSGGKAGPEEDEEGVSFTDFQPQDVTQHQGFPDELAFRSCSEIRSAWQALEQGQLARPGFPEPLLILEDSDLGGDSGSGKAGAPSSERTASRVRELARLYSERIQQMQRAETRASANAPRRRPRVLAQPQPSPCLPQEQAEPGLLPAFGHVLVCELAFPLTCAQESVPLGPAVWVQAAIPLSKQGGSPDGQGLHVSNLPKQDLPGIHVSAATLLPEQGGSRHVQAPAATPLPKQEGPLHLQVPALTTFSDQGHPEIQVPATTPLPEHRSHMVIPAPSTAFCPEQGHCADIHVPTTPALPKEICSDFTVSVTTPVPKQEGHLDSESPTNIPLTKQGGSRDVQGPDPVCSQPIQPLSWHGSSLDPQGPGDTLPPLPCHLPDLQIPGTSPLPAHGSHLDHRIPANAPLSLSQELPDTQVPATTPLPLPQVLTDIWVQALPTSPKQGSLPDIQGPAAAPPLPEPSLTDTQVQKLTPSLEQKSLIDAHVPAATPLPERGGSLDIQGLSPTPVQTTMVLSKPGGSLASHVARLESSDLTPPHSPPPSSRQLLGPNAAALSRYLAASYISQSLARRQGPGGGAPAASRGSWSSAPTSRASSPPPQPQPPPPPARRLSYATTVNIHVGGGGRLRPAKAQVRLNHPALLASTQESMGLHRAQGAPDAPFHM.

Disordered stretches follow at residues 1 to 21 and 36 to 82; these read MPEG…GCGR and TAPA…PLPG. Composition is skewed to low complexity over residues 8–17 and 45–62; these read LSLSKPSPSL and SPRG…GSEG. S90 carries the phosphoserine modification. The 182-residue stretch at 102–283 folds into the DH domain; the sequence is RLERVAREIV…TAVAWYINDM (182 aa). The PH domain maps to 313 to 411; it reads ELVLEGAFRG…WIHCLQRLFF (99 aa). Disordered stretches follow at residues 436-540, 554-612, 701-739, 790-815, and 829-859; these read KSKP…PSGT, GLRD…PSPL, EPAE…EEGV, ILED…RTAS, and QQMQ…SPCL. A Phosphothreonine modification is found at T445. 2 positions are modified to phosphoserine: S450 and S469. Residues 592–603 are compositionally biased toward acidic residues; it reads SEEEEEEEEGLE. A phosphoserine mark is found at S911 and S1049. 2 disordered regions span residues 1037-1099 and 1162-1191; these read PVPK…PLPC and TSPK…DTQV. 2 stretches are compositionally biased toward polar residues: residues 1048 to 1059 and 1073 to 1086; these read ESPTNIPLTKQG and QPIQ…SSLD. Position 1257 is a phosphothreonine (T1257). A phosphoserine mark is found at S1261 and S1310. Disordered stretches follow at residues 1291-1333 and 1367-1386; these read ARRQ…ARRL and TQES…PFHM. Low complexity predominate over residues 1301-1317; sequence PAASRGSWSSAPTSRAS. Positions 1318 to 1330 are enriched in pro residues; it reads SPPPQPQPPPPPA.

Functionally, may be a transforming oncogene with exchange activity for CDC42. May be a guanine-nucleotide exchange factor (GEF) for RAC1 and CDC42. Activated by the binding to subunits beta and gamma of the heterotrimeric guanine nucleotide-binding protein (G protein). Involved in the regulation of actin polymerization. In Homo sapiens (Human), this protein is Pleckstrin homology domain-containing family G member 2 (PLEKHG2).